The following is a 262-amino-acid chain: Zinc import ATP-binding protein ZnuC (262 aa).

The ABC transporter domain maps to Val5 to Ala220. Gly37 to Ser44 serves as a coordination point for ATP. Residues His236–Asp262 form a disordered region.

It belongs to the ABC transporter superfamily. Zinc importer (TC 3.A.1.15.5) family. The complex is composed of two ATP-binding proteins (ZnuC), two transmembrane proteins (ZnuB) and a solute-binding protein (ZnuA).

The protein resides in the cell inner membrane. It catalyses the reaction Zn(2+)(out) + ATP(in) + H2O(in) = Zn(2+)(in) + ADP(in) + phosphate(in) + H(+)(in). Functionally, part of the ABC transporter complex ZnuABC involved in zinc import. Responsible for energy coupling to the transport system. This Vibrio parahaemolyticus serotype O3:K6 (strain RIMD 2210633) protein is Zinc import ATP-binding protein ZnuC.